The following is a 327-amino-acid chain: Pyruvate dehydrogenase E1 component subunit beta (327 aa).

Glu60 is a thiamine diphosphate binding site. Residues Ile113, Ala161, Ile162, and Asn166 each coordinate K(+).

Heterodimer of an alpha and a beta chain. Thiamine diphosphate serves as cofactor.

Its subcellular location is the plastid. The protein localises to the chloroplast. The enzyme catalyses N(6)-[(R)-lipoyl]-L-lysyl-[protein] + pyruvate + H(+) = N(6)-[(R)-S(8)-acetyldihydrolipoyl]-L-lysyl-[protein] + CO2. Its function is as follows. The pyruvate dehydrogenase complex catalyzes the overall conversion of pyruvate to acetyl-CoA and CO(2). It contains multiple copies of three enzymatic components: pyruvate dehydrogenase (E1), dihydrolipoamide acetyltransferase (E2) and lipoamide dehydrogenase (E3). This is Pyruvate dehydrogenase E1 component subunit beta (pdhB) from Mesostigma viride (Green alga).